The following is a 148-amino-acid chain: MDVILLQRIKNLGKLGDKVSVKAGYGRNFLIPQGKAVAATEANTAAFEARRAELEKQEAEVLAAAQARAEQLNEVNIVITAKAGDEGKLFGSIGTRDIADALTNAGLTVDRAEVRLPNGALRHTGEFNIAIQLHHDVVAEVLVTIVSE.

Belongs to the bacterial ribosomal protein bL9 family.

Functionally, binds to the 23S rRNA. In Acinetobacter baumannii (strain AB307-0294), this protein is Large ribosomal subunit protein bL9.